The following is a 795-amino-acid chain: Protein ROOT HAIR DEFECTIVE 3 homolog 1 (795 aa).

The Cytoplasmic portion of the chain corresponds to 1 to 682 (MDADKSEGCC…EANRRGNNWL (682 aa)). The 216-residue stretch at 39 to 254 (GLSYAVVSIM…IAPGGLAGDR (216 aa)) folds into the GB1/RHD3-type G domain. 49–56 (GPQSSGKS) lines the GTP pocket. The stretch at 218–244 (VALSSYEEKEEQFKEQIASLRQRFMHS) forms a coiled coil. A helical transmembrane segment spans residues 683 to 703 (PPPWAILALIVLGFNEFMTLL). Residues 704 to 706 (RNP) lie on the Lumenal side of the membrane. Residues 707–727 (LYLGVMFVAFLLAKALWTQLD) form a helical membrane-spanning segment. Over 728-795 (IPGEFRNGAL…PDHKSSSKED (68 aa)) the chain is Cytoplasmic. A disordered region spans residues 761–795 (QGEDPPAANPENRRSSNNTSSSENPPDHKSSSKED). A compositionally biased stretch (low complexity) spans 775–784 (SSNNTSSSEN). Basic and acidic residues predominate over residues 785 to 795 (PPDHKSSSKED).

It belongs to the TRAFAC class dynamin-like GTPase superfamily. GB1/RHD3 GTPase family. RHD3 subfamily. As to expression, specifically expressed in flowers.

The protein resides in the endoplasmic reticulum membrane. Its function is as follows. Probable GTP-binding protein that may be involved in cell development. This is Protein ROOT HAIR DEFECTIVE 3 homolog 1 from Arabidopsis thaliana (Mouse-ear cress).